Reading from the N-terminus, the 134-residue chain is MPTINQLVKHGREKVKEKSKSPALQGHPQKRGVCVRVSTMTPKKPNSALRKIAKVRLSNGIEVTAYIPGIGHNLQEHSIVLVRGGRVKDLPGVRYKIIRGALDAAGVENRRQSRSKYGAKRPKAGAAAGAKGKK.

The disordered stretch occupies residues 1–30 (MPTINQLVKHGREKVKEKSKSPALQGHPQK). At aspartate 89 the chain carries 3-methylthioaspartic acid. Residues 106 to 134 (GVENRRQSRSKYGAKRPKAGAAAGAKGKK) are disordered. The span at 112–123 (QSRSKYGAKRPK) shows a compositional bias: basic residues. Over residues 124–134 (AGAAAGAKGKK) the composition is skewed to low complexity.

It belongs to the universal ribosomal protein uS12 family. Part of the 30S ribosomal subunit. Contacts proteins S8 and S17. May interact with IF1 in the 30S initiation complex.

Its function is as follows. With S4 and S5 plays an important role in translational accuracy. In terms of biological role, interacts with and stabilizes bases of the 16S rRNA that are involved in tRNA selection in the A site and with the mRNA backbone. Located at the interface of the 30S and 50S subunits, it traverses the body of the 30S subunit contacting proteins on the other side and probably holding the rRNA structure together. The combined cluster of proteins S8, S12 and S17 appears to hold together the shoulder and platform of the 30S subunit. This chain is Small ribosomal subunit protein uS12, found in Fervidobacterium nodosum (strain ATCC 35602 / DSM 5306 / Rt17-B1).